The chain runs to 558 residues: Putative cation/proton antiporter YbaL (558 aa).

Over 1–3 (MHH) the chain is Periplasmic. The chain crosses the membrane as a helical span at residues 4 to 24 (ATPLITTIVGGLVLAFILGML). The Cytoplasmic portion of the chain corresponds to 25–31 (ANKLRIS). A helical membrane pass occupies residues 32–52 (PLVGYLLAGVLAGPFTPGFVA). The Periplasmic segment spans residues 53 to 55 (DTK). The chain crosses the membrane as a helical span at residues 56 to 76 (LAPELAELGVILLMFGVGLHF). The Cytoplasmic portion of the chain corresponds to 77–85 (SLKDLMAVK). Residues 86 to 106 (AIAIPGAIAQIAVATLLGMAL) form a helical membrane-spanning segment. Over 107–112 (SAVLGW) the chain is Periplasmic. A helical membrane pass occupies residues 113-133 (SLMTGIVFGLCLSTASTVVLL). Residues 134–148 (RALEERQLIDSQRGQ) are Cytoplasmic-facing. The chain crosses the membrane as a helical span at residues 149 to 169 (IAIGWLIVEDLVMVLTLVLLP). Topologically, residues 170–185 (AVAGMMEQGDVGFATL) are periplasmic. The helical transmembrane segment at 186 to 206 (AVDMGITIGKVIAFIAIMMLV) threads the bilayer. Topologically, residues 207-225 (GRRLVPWIMARSAATGSRE) are cytoplasmic. A helical membrane pass occupies residues 226–246 (LFTLSVLALALGVAFGAVELF). D247 is a topological domain (periplasmic). Residues 248–268 (VSFALGAFFAGMVLNESELSH) form a helical membrane-spanning segment. Residues 269–279 (RAAHDTLPLRD) lie on the Cytoplasmic side of the membrane. Residues 280–300 (AFAVLFFVSVGMLFDPLILIQ) traverse the membrane as a helical segment. Over 301–303 (QPL) the chain is Periplasmic. Residues 304–324 (AVLATLAIILFGKSLAAFFLV) form a helical membrane-spanning segment. The Cytoplasmic segment spans residues 325 to 336 (RLFGHSQRTALT). The chain crosses the membrane as a helical span at residues 337–357 (IAASLAQIGEFAFILAGLGMA). Over 358 to 367 (LNLLPQAGQN) the chain is Periplasmic. The chain crosses the membrane as a helical span at residues 368 to 388 (LVLAGAILSIMLNPVLFALLE). The Cytoplasmic segment spans residues 389–558 (KYLAKTETLE…TPPAGEVVTG (170 aa)). The region spanning 417 to 534 (CNHALLVGYG…TERGANQVVM (118 aa)) is the RCK N-terminal domain. Residues 427 to 428 (RV), 447 to 448 (ET), 467 to 468 (NA), E494, and R514 each bind AMP.

It belongs to the monovalent cation:proton antiporter 2 (CPA2) transporter (TC 2.A.37) family.

Its subcellular location is the cell inner membrane. The polypeptide is Putative cation/proton antiporter YbaL (ybaL) (Escherichia coli (strain K12)).